A 524-amino-acid chain; its full sequence is MSLCLVIACMVTSWIFLHRWGQRNKSGPKTWPLVGAAIEQLTNFDRMHDWLVEYLYNSRTVVVPMPFTTYTYIADPINVEYVLKTNFSNYPKGETYHSYMEVLLGDGIFNSDGELWRKQRKTASFEFASKNLRDFSTVVFKEYSLKLFTILSQASFKEQQVDMQELLMRMTLDSICKVGFGVEIGTLAPELPENHFAKAFDTANIIVTLRFIDPLWKMKKFLNIGSEALLGKSIKVVNDFTYSVIRRRKAELLEAQISPTNNNNNNNNKVKHDILSRFIEISDDPDSKETEKSLRDIVLNFVIAGRDTTATTLTWAIYMIMMNENVAEKLYSELQELEKESAEATNTSLHQYDTEDFNSFNEKVTEFAGLLNYDSLGKLHYLHAVITETLRLYPAVPQDPKGVLEDDMLPNGTKVKAGGMVTYVPYSMGRMEYNWGSDAALFKPERWLKDGVFQNASPFKFTAFQAGPRICLGKDSAYLQMKMAMAILCRFYKFHLVPNHPVKYRMMTILSMAHGLKVTVSRRS.

Residues 2-22 form a helical membrane-spanning segment; it reads SLCLVIACMVTSWIFLHRWGQ. Position 471 (Cys-471) interacts with heme.

It belongs to the cytochrome P450 family. Requires heme as cofactor.

It localises to the membrane. The enzyme catalyses an omega-methyl-long-chain fatty acid + reduced [NADPH--hemoprotein reductase] + O2 = an omega-hydroxy-long-chain fatty acid + oxidized [NADPH--hemoprotein reductase] + H2O + H(+). Its function is as follows. Involved in pollen wall development. Catalyzes the conversion of long-chain fatty acids to the corresponding omega-hydroxylated fatty acids. Omega-hydroxylated fatty acids, together with in-chain hydroxylated fatty acids, are key monomeric aliphatic building blocks for sporopollenin synthesis during exine formation. The polypeptide is Cytochrome P450 704B1 (CYP704B1) (Arabidopsis thaliana (Mouse-ear cress)).